The following is a 319-amino-acid chain: Super small secreted glycoprotein (319 aa).

Residues M1–S32 form the signal peptide. N40 carries an N-linked (GlcNAc...) asparagine; by host glycan. Cystine bridges form between C108-C135 and C121-C147. 5 N-linked (GlcNAc...) asparagine; by host glycosylation sites follow: N204, N208, N238, N257, and N268.

Belongs to the filoviruses glycoprotein family.

It localises to the secreted. This Sudan ebolavirus (strain Human/Uganda/Gulu/2000) (SEBOV) protein is Super small secreted glycoprotein (GP).